A 112-amino-acid polypeptide reads, in one-letter code: Ciliary microtubule inner protein 3 (112 aa).

The interval 1 to 34 (MCKDSQKPSVPSHGPKTPSCKGVKAPHSSRPRAW) is disordered.

Belongs to the CIMIP3-like family.

Its subcellular location is the cytoplasm. The protein resides in the cytoskeleton. It localises to the flagellum axoneme. This chain is Ciliary microtubule inner protein 3, found in Homo sapiens (Human).